A 300-amino-acid polypeptide reads, in one-letter code: Inosose dehydratase (300 aa).

It belongs to the IolE/MocC family. Glutathione is required as a cofactor. It depends on Co(2+) as a cofactor. Mn(2+) serves as cofactor.

The catalysed reaction is scyllo-inosose = 3D-3,5/4-trihydroxycyclohexane-1,2-dione + H2O. The protein operates within polyol metabolism; myo-inositol degradation into acetyl-CoA; acetyl-CoA from myo-inositol: step 2/7. Functionally, catalyzes the dehydration of inosose (2-keto-myo-inositol, 2KMI or 2,4,6/3,5-pentahydroxycyclohexanone) to 3D-(3,5/4)-trihydroxycyclohexane-1,2-dione (D-2,3-diketo-4-deoxy-epi-inositol). This is Inosose dehydratase from Bacillus licheniformis (strain ATCC 14580 / DSM 13 / JCM 2505 / CCUG 7422 / NBRC 12200 / NCIMB 9375 / NCTC 10341 / NRRL NRS-1264 / Gibson 46).